The chain runs to 234 residues: Uridylate kinase (234 aa).

9-12 (KLSG) is an ATP binding site. G51 contributes to the UMP binding site. G52 and R56 together coordinate ATP. Residues D71 and 132–139 (CGNPFFTT) contribute to the UMP site. T159, Y165, and D168 together coordinate ATP.

This sequence belongs to the UMP kinase family. As to quaternary structure, homohexamer.

The protein localises to the cytoplasm. The enzyme catalyses UMP + ATP = UDP + ADP. Its pathway is pyrimidine metabolism; CTP biosynthesis via de novo pathway; UDP from UMP (UMPK route): step 1/1. With respect to regulation, inhibited by UTP. Catalyzes the reversible phosphorylation of UMP to UDP. The chain is Uridylate kinase from Prochlorococcus marinus (strain MIT 9312).